Reading from the N-terminus, the 402-residue chain is Cholinephosphotransferase 1 (402 aa).

Residues 1-62 lie on the Cytoplasmic side of the membrane; it reads MGLAEGLAAR…LVEKVPLWLA (62 aa). Residues 63-83 form a helical membrane-spanning segment; sequence PNTITMVGLLLNVLSTLILVC. Residue Asn-64 participates in CDP-choline binding. The Lumenal portion of the chain corresponds to 84-93; that stretch reads YCPTATEGAP. The chain crosses the membrane as a helical span at residues 94–118; the sequence is FWTYLLCAIGLFVYQSLDAIDGKQA. Mg(2+)-binding residues include Asp-111 and Asp-114. Arg-119 serves as a coordination point for CDP-choline. Over 119-125 the chain is Cytoplasmic; the sequence is RRTNSSS. Residues 126-150 traverse the membrane as a helical segment; the sequence is PLGEMFDHGCDSISIVFVNLGTIAA. Residue Asp-132 coordinates Mg(2+). The active-site Proton acceptor is His-133. Asp-136 lines the Mg(2+) pocket. Topologically, residues 151 to 160 are lumenal; the sequence is VRLGTLPGWM. The helical transmembrane segment at 161–179 threads the bilayer; it reads FYCCFVGMFMFYCAQWQTY. Over 180–190 the chain is Cytoplasmic; that stretch reads VCGTLKFGIID. The helical transmembrane segment at 191–207 threads the bilayer; it reads VTELQISVTVMFLMTAV. The Lumenal segment spans residues 208 to 222; the sequence is CGPELWDYEIPFTGL. Residues 223–248 traverse the membrane as a helical segment; the sequence is PMKTIPLLGIIGGTVYSCSNYFRVIL. At 249 to 265 the chain is on the cytoplasmic side; sequence SGGVGKNGSTVAGTSVL. A helical transmembrane segment spans residues 266–281; that stretch reads SPGLHIGLVLLLALMI. Residues 282–293 are Lumenal-facing; the sequence is YKKSTTNLFLQN. The helical transmembrane segment at 294 to 316 threads the bilayer; that stretch reads PCLYTLAFGFVSAKITIKLVIAH. The Cytoplasmic segment spans residues 317-329; it reads MTKSEISLQDTAF. The helical transmembrane segment at 330–339 threads the bilayer; sequence IGPGLLFFNQ. Residues 340–346 are Lumenal-facing; the sequence is YFNSFID. Residues 347–376 traverse the membrane as a helical segment; sequence EYIVLWIAMVISFADLLRYCISVCLQIATH. Over 377-402 the chain is Cytoplasmic; that stretch reads LRISVFRISSNQAAEQVQTQKQKLTD.

Belongs to the CDP-alcohol phosphatidyltransferase class-I family. Homodimer. It depends on Mg(2+) as a cofactor. Requires Mn(2+) as cofactor.

It is found in the golgi apparatus membrane. It carries out the reaction CDP-choline + a 1,2-diacyl-sn-glycerol = a 1,2-diacyl-sn-glycero-3-phosphocholine + CMP + H(+). The enzyme catalyses 1,2-dioctanoyl-sn-glycerol + CDP-choline = 1,2-dioctanoyl-sn-glycero-3-phosphocholine + CMP + H(+). It catalyses the reaction 1-octadecanoyl-2-(5Z,8Z,11Z,14Z-eicosatetraenoyl)-sn-glycerol + CDP-choline = 1-octadecanoyl-2-(5Z,8Z,11Z,14Z-eicosatetraenoyl)-sn-glycero-3-phosphocholine + CMP + H(+). The catalysed reaction is 1-hexadecanoyl-2-(9Z-octadecenoyl)-sn-glycerol + CDP-choline = 1-hexadecanoyl-2-(9Z-octadecenoyl)-sn-glycero-3-phosphocholine + CMP + H(+). It carries out the reaction 1-hexadecanoyl-2-(4Z,7Z,10Z,13Z,16Z,19Z-docosahexaenoyl)-sn-glycerol + CDP-choline = 1-hexadecanoyl-2-(4Z,7Z,10Z,13Z,16Z,19Z-docosahexaenoyl)-sn-glycero-3-phosphocholine + CMP + H(+). The protein operates within phospholipid metabolism; phosphatidylcholine biosynthesis; phosphatidylcholine from phosphocholine: step 2/2. Its function is as follows. Catalyzes the final step of de novo phosphatidylcholine (PC) synthesis, i.e. the transfer of choline phosphate from CDP-choline to the free hydroxyl of a diacylglycerol (DAG), producing a PC. It thereby plays a central role in the formation and maintenance of vesicular membranes. Shows a high preference for CDP-choline over CDP-ethanolamine as substrate. This is Cholinephosphotransferase 1 (chpt1) from Xenopus laevis (African clawed frog).